The following is a 525-amino-acid chain: uncharacterized protein (525 aa).

At S55 the chain carries Phosphoserine. A run of 13 helical transmembrane segments spans residues 81–101 (AYIV…PNFY), 120–140 (LLGQ…LGPL), 147–167 (KLVY…CALA), 173–193 (LVIS…NVAG), 208–228 (MYMF…GTGV), 238–258 (WLYW…VFTP), 295–315 (FVFF…SLGI), 318–338 (GFVN…YFSI), 350–370 (YMAA…QCWL), 388–408 (FIMT…FAFC), 413–433 (IHYI…YHIW), 454–474 (AFEL…ALMF), and 484–504 (AVVG…YFYG).

This sequence belongs to the major facilitator superfamily. CAR1 family.

The protein resides in the membrane. This is an uncharacterized protein from Schizosaccharomyces pombe (strain 972 / ATCC 24843) (Fission yeast).